Reading from the N-terminus, the 455-residue chain is Adenylyltransferase and sulfurtransferase MOCS3 (455 aa).

Residues Gly90, Asp111, 118 to 122, Lys135, and 179 to 180 each bind ATP; these read SNLAR and DN. The interaction with NFS1 stretch occupies residues 156–236; it reads AQALTPATAL…RPPPAETVTS (81 aa). Zn(2+) contacts are provided by Cys220 and Cys223. Cys237 acts as the Glycyl thioester intermediate; for adenylyltransferase activity in catalysis. Positions 295 and 298 each coordinate Zn(2+). Residues Cys314 and Cys322 are joined by a disulfide bond. The region spanning 345–453 is the Rhodanese domain; the sequence is SRSPHLLLDV…WAAKIDGTFP (109 aa). The Cysteine persulfide intermediate; for sulfurtransferase activity role is filled by Cys410. Residue Cys410 is modified to Cysteine persulfide.

It in the N-terminal section; belongs to the HesA/MoeB/ThiF family. UBA4 subfamily. Interacts with NFS1. Requires Zn(2+) as cofactor.

It is found in the cytoplasm. The protein resides in the cytosol. It catalyses the reaction [molybdopterin-synthase sulfur-carrier protein]-C-terminal Gly-Gly + ATP + H(+) = [molybdopterin-synthase sulfur-carrier protein]-C-terminal Gly-Gly-AMP + diphosphate. The catalysed reaction is [molybdopterin-synthase sulfur-carrier protein]-C-terminal Gly-Gly-AMP + S-sulfanyl-L-cysteinyl-[cysteine desulfurase] + AH2 = [molybdopterin-synthase sulfur-carrier protein]-C-terminal-Gly-aminoethanethioate + L-cysteinyl-[cysteine desulfurase] + A + AMP + 2 H(+). It functions in the pathway tRNA modification; 5-methoxycarbonylmethyl-2-thiouridine-tRNA biosynthesis. Its pathway is cofactor biosynthesis; molybdopterin biosynthesis. Plays a central role in 2-thiolation of mcm(5)S(2)U at tRNA wobble positions of cytosolic tRNA(Lys), tRNA(Glu) and tRNA(Gln). Also essential during biosynthesis of the molybdenum cofactor. Acts by mediating the C-terminal thiocarboxylation of sulfur carriers URM1 and MOCS2A. Its N-terminus first activates URM1 and MOCS2A as acyl-adenylates (-COAMP), then the persulfide sulfur on the catalytic cysteine is transferred to URM1 and MOCS2A to form thiocarboxylation (-COSH) of their C-terminus. The reaction probably involves hydrogen sulfide that is generated from the persulfide intermediate and that acts as a nucleophile towards URM1 and MOCS2A. Subsequently, a transient disulfide bond is formed. Does not use thiosulfate as sulfur donor; NFS1 acting as a sulfur donor for thiocarboxylation reactions. In Bos taurus (Bovine), this protein is Adenylyltransferase and sulfurtransferase MOCS3.